Here is a 120-residue protein sequence, read N- to C-terminus: uncharacterized protein (120 aa).

Residues 3–120 (IRYKKAFEKI…EKCEICHGSE (118 aa)) form the N-acetyltransferase domain.

This is an uncharacterized protein from Bacillus methanolicus.